A 154-amino-acid polypeptide reads, in one-letter code: Ribosomal RNA large subunit methyltransferase H (154 aa).

Glycine 103 is a binding site for S-adenosyl-L-methionine.

This sequence belongs to the RNA methyltransferase RlmH family. Homodimer.

It localises to the cytoplasm. It carries out the reaction pseudouridine(1915) in 23S rRNA + S-adenosyl-L-methionine = N(3)-methylpseudouridine(1915) in 23S rRNA + S-adenosyl-L-homocysteine + H(+). Its function is as follows. Specifically methylates the pseudouridine at position 1915 (m3Psi1915) in 23S rRNA. The polypeptide is Ribosomal RNA large subunit methyltransferase H (Gemmatimonas aurantiaca (strain DSM 14586 / JCM 11422 / NBRC 100505 / T-27)).